A 178-amino-acid polypeptide reads, in one-letter code: ATP-dependent protease subunit HslV (178 aa).

The active site involves threonine 7. Na(+)-binding residues include glycine 162, cysteine 165, and threonine 168.

The protein belongs to the peptidase T1B family. HslV subfamily. In terms of assembly, a double ring-shaped homohexamer of HslV is capped on each side by a ring-shaped HslU homohexamer. The assembly of the HslU/HslV complex is dependent on binding of ATP.

It localises to the cytoplasm. The catalysed reaction is ATP-dependent cleavage of peptide bonds with broad specificity.. With respect to regulation, allosterically activated by HslU binding. Protease subunit of a proteasome-like degradation complex believed to be a general protein degrading machinery. The chain is ATP-dependent protease subunit HslV from Dechloromonas aromatica (strain RCB).